We begin with the raw amino-acid sequence, 693 residues long: Heat shock protein homolog SSE2 (693 aa).

The segment at 653 to 693 (LRANQETSKMNDIAEKLAEQRRARAASDDSDDNNDENMDLD) is disordered. Residues 664–679 (DIAEKLAEQRRARAAS) are compositionally biased toward basic and acidic residues. Over residues 680-693 (DDSDDNNDENMDLD) the composition is skewed to acidic residues.

It belongs to the heat shock protein 70 family.

Has a calcium-dependent calmodulin-binding activity. This chain is Heat shock protein homolog SSE2 (SSE2), found in Saccharomyces cerevisiae (strain ATCC 204508 / S288c) (Baker's yeast).